The following is a 254-amino-acid chain: Ubiquinone biosynthesis O-methyltransferase (254 aa).

The S-adenosyl-L-methionine site is built by arginine 47, glycine 78, aspartate 99, and methionine 141.

Belongs to the methyltransferase superfamily. UbiG/COQ3 family.

The catalysed reaction is a 3-demethylubiquinol + S-adenosyl-L-methionine = a ubiquinol + S-adenosyl-L-homocysteine + H(+). It carries out the reaction a 3-(all-trans-polyprenyl)benzene-1,2-diol + S-adenosyl-L-methionine = a 2-methoxy-6-(all-trans-polyprenyl)phenol + S-adenosyl-L-homocysteine + H(+). It functions in the pathway cofactor biosynthesis; ubiquinone biosynthesis. In terms of biological role, O-methyltransferase that catalyzes the 2 O-methylation steps in the ubiquinone biosynthetic pathway. The chain is Ubiquinone biosynthesis O-methyltransferase from Rhodopseudomonas palustris (strain BisB18).